A 460-amino-acid chain; its full sequence is Kynureninase (460 aa).

Pyridoxal 5'-phosphate-binding positions include leucine 127, threonine 128, 165–168 (FPSD), aspartate 249, histidine 252, and tyrosine 274. Lysine 275 bears the N6-(pyridoxal phosphate)lysine mark. Positions 304 and 332 each coordinate pyridoxal 5'-phosphate.

The protein belongs to the kynureninase family. In terms of assembly, homodimer. The cofactor is pyridoxal 5'-phosphate.

The protein resides in the cytoplasm. The enzyme catalyses L-kynurenine + H2O = anthranilate + L-alanine + H(+). It carries out the reaction 3-hydroxy-L-kynurenine + H2O = 3-hydroxyanthranilate + L-alanine + H(+). Its pathway is amino-acid degradation; L-kynurenine degradation; L-alanine and anthranilate from L-kynurenine: step 1/1. It participates in cofactor biosynthesis; NAD(+) biosynthesis; quinolinate from L-kynurenine: step 2/3. Its function is as follows. Catalyzes the cleavage of L-kynurenine (L-Kyn) and L-3-hydroxykynurenine (L-3OHKyn) into anthranilic acid (AA) and 3-hydroxyanthranilic acid (3-OHAA), respectively. The sequence is that of Kynureninase from Monosiga brevicollis (Choanoflagellate).